Consider the following 116-residue polypeptide: U11-theraphotoxin-Hhn1b (116 aa).

An N-terminal signal peptide occupies residues 1–21; that stretch reads MNTVRVTFLLVFVLAVSLGQA. Positions 22-74 are excised as a propeptide; it reads DKDENRMEMQEKTEQGKSYLDFAENLLLQKLEELEAKLLEEDSEESRNSRQKR. Over residues 60 to 69 the composition is skewed to basic and acidic residues; it reads LEEDSEESRN. Residues 60 to 83 form a disordered region; the sequence is LEEDSEESRNSRQKRCIGEGVPCD. Intrachain disulfides connect Cys-75–Cys-90, Cys-82–Cys-95, and Cys-89–Cys-110.

Belongs to the neurotoxin 14 (magi-1) family. 01 (HNTX-16) subfamily. In terms of tissue distribution, expressed by the venom gland.

The protein localises to the secreted. In terms of biological role, probable ion channel inhibitor. The sequence is that of U11-theraphotoxin-Hhn1b from Cyriopagopus hainanus (Chinese bird spider).